The following is a 353-amino-acid chain: UDP-N-acetylglucosamine--N-acetylmuramyl-(pentapeptide) pyrophosphoryl-undecaprenol N-acetylglucosamine transferase (353 aa).

Residues asparagine 123, arginine 161, serine 189, isoleucine 243, 262-267 (ALTVSE), and glutamine 287 each bind UDP-N-acetyl-alpha-D-glucosamine.

It belongs to the glycosyltransferase 28 family. MurG subfamily.

It localises to the cell membrane. It catalyses the reaction di-trans,octa-cis-undecaprenyl diphospho-N-acetyl-alpha-D-muramoyl-L-alanyl-D-glutamyl-meso-2,6-diaminopimeloyl-D-alanyl-D-alanine + UDP-N-acetyl-alpha-D-glucosamine = di-trans,octa-cis-undecaprenyl diphospho-[N-acetyl-alpha-D-glucosaminyl-(1-&gt;4)]-N-acetyl-alpha-D-muramoyl-L-alanyl-D-glutamyl-meso-2,6-diaminopimeloyl-D-alanyl-D-alanine + UDP + H(+). The protein operates within cell wall biogenesis; peptidoglycan biosynthesis. Cell wall formation. Catalyzes the transfer of a GlcNAc subunit on undecaprenyl-pyrophosphoryl-MurNAc-pentapeptide (lipid intermediate I) to form undecaprenyl-pyrophosphoryl-MurNAc-(pentapeptide)GlcNAc (lipid intermediate II). This is UDP-N-acetylglucosamine--N-acetylmuramyl-(pentapeptide) pyrophosphoryl-undecaprenol N-acetylglucosamine transferase from Buchnera aphidicola subsp. Baizongia pistaciae (strain Bp).